A 104-amino-acid polypeptide reads, in one-letter code: Large ribosomal subunit protein bL21 (104 aa).

This sequence belongs to the bacterial ribosomal protein bL21 family. As to quaternary structure, part of the 50S ribosomal subunit. Contacts protein L20.

Functionally, this protein binds to 23S rRNA in the presence of protein L20. In Tropheryma whipplei (strain Twist) (Whipple's bacillus), this protein is Large ribosomal subunit protein bL21.